The chain runs to 229 residues: Transcriptional regulatory protein CreB (229 aa).

The region spanning 5-119 (TVWLVEDEQG…EVCARVRTLL (115 aa)) is the Response regulatory domain. Residue aspartate 54 is modified to 4-aspartylphosphate. The ompR/PhoB-type DNA-binding region spans 129–228 (SPVIRIGHFE…HRGMGYSLRG (100 aa)).

Phosphorylated by CreC.

Its subcellular location is the cytoplasm. Member of the two-component regulatory system CreC/CreB involved in catabolic regulation. The chain is Transcriptional regulatory protein CreB (creB) from Escherichia coli (strain K12).